The chain runs to 393 residues: Glutamyl-tRNA reductase (393 aa).

Residues 47-50 (TCSR), Ser-98, 103-105 (ETD), and Gln-109 each bind substrate. Cys-48 (nucleophile) is an active-site residue. 177–182 (GAGAVG) is an NADP(+) binding site.

The protein belongs to the glutamyl-tRNA reductase family. In terms of assembly, homodimer.

It catalyses the reaction (S)-4-amino-5-oxopentanoate + tRNA(Glu) + NADP(+) = L-glutamyl-tRNA(Glu) + NADPH + H(+). It functions in the pathway porphyrin-containing compound metabolism; protoporphyrin-IX biosynthesis; 5-aminolevulinate from L-glutamyl-tRNA(Glu): step 1/2. Functionally, catalyzes the NADPH-dependent reduction of glutamyl-tRNA(Glu) to glutamate 1-semialdehyde (GSA). This chain is Glutamyl-tRNA reductase, found in Pyrobaculum neutrophilum (strain DSM 2338 / JCM 9278 / NBRC 100436 / V24Sta) (Thermoproteus neutrophilus).